The following is a 263-amino-acid chain: MEDETELCFRSNKVTRLEMFVCTYGGKITSLACSHMELIKMLQIAEPVKALNCNFGHQCLPGYESLIKTPKKTKNMLRRPRKTEGDGTCFNSAIEASILFKDKMYKLKCFPSTGEIQVPGVIFPDFEDGKNIIQQWVDFLQHQPIEKKIQIIEFKTIMINFKFQINPVSPRVIIHLKKFAALLEHIPTPYPIREIKPPLEDSKVSAKFMVSPGKKVRINVFLKGKINILGCNTKESAEIIYTFLKDLISVHWQEILCVLPVPD.

It belongs to the asfivirus B263R family.

In terms of biological role, putative TATA-binding protein. In Ornithodoros (relapsing fever ticks), this protein is Putative TATA-binding protein pB263R.